The primary structure comprises 483 residues: Altronate oxidoreductase (483 aa).

Residue 18–29 (IIQFGEGNFLRA) participates in NAD(+) binding.

It belongs to the mannitol dehydrogenase family. UxaB subfamily.

The enzyme catalyses D-altronate + NAD(+) = keto-D-tagaturonate + NADH + H(+). It functions in the pathway carbohydrate metabolism; pentose and glucuronate interconversion. The chain is Altronate oxidoreductase from Klebsiella pneumoniae (strain 342).